Consider the following 37-residue polypeptide: Unknown protein 25 (37 aa).

The sequence is that of Unknown protein 25 from Pseudotsuga menziesii (Douglas-fir).